Here is a 293-residue protein sequence, read N- to C-terminus: Mitochondrial glycine transporter (293 aa).

Solcar repeat units follow at residues 6-85 (GGVP…SRSA), 102-186 (LQSY…AKEM), and 208-291 (ASAM…LLKL). 6 consecutive transmembrane segments (helical) span residues 12–37 (LVSGFFGGLASVCALQPLDLLKTRLQ), 60–86 (GTLPSALRTSIGSALYLSLLNYSRSAL), 108–133 (LLTGALSRAAVGLVTMPITVIKVRYE), 161–184 (GAAATTLRDAPYAGLYVLLYEQAK), 212–238 (VNGVSAFLSASLATTLTAPFDTIKTRM), and 266–284 (GLSLRLCRKAMSACIAWGI).

This sequence belongs to the mitochondrial carrier (TC 2.A.29) family. SLC25A38 subfamily.

Its subcellular location is the mitochondrion inner membrane. It catalyses the reaction glycine(in) = glycine(out). Its function is as follows. Mitochondrial glycine transporter that imports glycine into the mitochondrial matrix. Plays an important role in providing glycine for the first enzymatic step in heme biosynthesis, the condensation of glycine with succinyl-CoA to produce 5-aminolevulinate (ALA) in the mitochondrial matrix. The chain is Mitochondrial glycine transporter from Eremothecium gossypii (strain ATCC 10895 / CBS 109.51 / FGSC 9923 / NRRL Y-1056) (Yeast).